The sequence spans 469 residues: Glutamate--tRNA ligase (469 aa).

Residues 12 to 22 (PSPTGFIHLGN) carry the 'HIGH' region motif. Positions 244 to 248 (KMSKR) match the 'KMSKS' region motif. K247 is a binding site for ATP.

This sequence belongs to the class-I aminoacyl-tRNA synthetase family. Glutamate--tRNA ligase type 1 subfamily. Monomer.

The protein resides in the cytoplasm. The enzyme catalyses tRNA(Glu) + L-glutamate + ATP = L-glutamyl-tRNA(Glu) + AMP + diphosphate. Functionally, catalyzes the attachment of glutamate to tRNA(Glu) in a two-step reaction: glutamate is first activated by ATP to form Glu-AMP and then transferred to the acceptor end of tRNA(Glu). In Acidovorax sp. (strain JS42), this protein is Glutamate--tRNA ligase.